A 382-amino-acid polypeptide reads, in one-letter code: Succinyl-diaminopimelate desuccinylase (382 aa).

His70 is a Zn(2+) binding site. Residue Asp72 is part of the active site. Asp103 lines the Zn(2+) pocket. The active-site Proton acceptor is the Glu137. The Zn(2+) site is built by Glu138, Glu166, and His355.

It belongs to the peptidase M20A family. DapE subfamily. As to quaternary structure, homodimer. Requires Zn(2+) as cofactor. Co(2+) is required as a cofactor.

It carries out the reaction N-succinyl-(2S,6S)-2,6-diaminopimelate + H2O = (2S,6S)-2,6-diaminopimelate + succinate. It participates in amino-acid biosynthesis; L-lysine biosynthesis via DAP pathway; LL-2,6-diaminopimelate from (S)-tetrahydrodipicolinate (succinylase route): step 3/3. Catalyzes the hydrolysis of N-succinyl-L,L-diaminopimelic acid (SDAP), forming succinate and LL-2,6-diaminopimelate (DAP), an intermediate involved in the bacterial biosynthesis of lysine and meso-diaminopimelic acid, an essential component of bacterial cell walls. The chain is Succinyl-diaminopimelate desuccinylase from Paracoccus denitrificans (strain Pd 1222).